We begin with the raw amino-acid sequence, 175 residues long: NADH-ubiquinone oxidoreductase chain 6 (175 aa).

Helical transmembrane passes span 1 to 21, 25 to 45, 47 to 67, 88 to 108, and 149 to 169; these read MMTY…VGFS, SPIY…GIIM, FGGS…MLVV, TVMG…LYVL, and YGAW…LVIL.

This sequence belongs to the complex I subunit 6 family. In terms of assembly, core subunit of respiratory chain NADH dehydrogenase (Complex I) which is composed of 45 different subunits.

The protein resides in the mitochondrion inner membrane. It carries out the reaction a ubiquinone + NADH + 5 H(+)(in) = a ubiquinol + NAD(+) + 4 H(+)(out). Core subunit of the mitochondrial membrane respiratory chain NADH dehydrogenase (Complex I) which catalyzes electron transfer from NADH through the respiratory chain, using ubiquinone as an electron acceptor. Essential for the catalytic activity and assembly of complex I. This Equus asinus (Donkey) protein is NADH-ubiquinone oxidoreductase chain 6 (MT-ND6).